The chain runs to 626 residues: 5'-AMP-activated protein kinase catalytic subunit alpha-2 (626 aa).

Over residues 1-24 the composition is skewed to basic and acidic residues; that stretch reads MFSHQDRDRDRKEDGGGDGTEMKS. Residues 1–77 are disordered; that stretch reads MFSHQDRDRD…GETSTKQQQE (77 aa). The span at 38 to 49 shows a compositional bias: basic residues; the sequence is NLSRKLSAKSRK. Positions 58-77 are enriched in polar residues; sequence DNSSKMSSPGGETSTKQQQE. Residues 87–339 enclose the Protein kinase domain; sequence YILKETLGVG…IKDVIAHEWF (253 aa). ATP-binding positions include 93–101 and lysine 116; that span reads LGVGTFGKV. Aspartate 210 functions as the Proton acceptor in the catalytic mechanism. Residue threonine 243 is modified to Phosphothreonine; by par-4. The segment at 541–568 is disordered; the sequence is SGSASASSSRHASMSMPQKPAGIRGTRT. Over residues 542–555 the composition is skewed to low complexity; that stretch reads GSASASSSRHASMS.

The protein belongs to the protein kinase superfamily. CAMK Ser/Thr protein kinase family. SNF1 subfamily. Tetramer, composed of 2 regulatory (R) and 2 catalytic (C) subunits. In the presence of cAMP it dissociates into 2 active monomeric C subunits and an R dimer that binds four cAMP molecules. Post-translationally, phosphorylated on Thr-243 in response to oxidative stress and during dauer development. Phosphorylation at Thr-243 is increased in response to sodium azide or the AMP analog AICAR (5-amino-1-(5-phospho-beta-D-ribosyl)imidazole-4-carboxamide). Expressed in the pharynx, the ventral cord, neurons including the hermaphrodite-specific neuron, body wall muscles, the vulva, the excretory canal, and weakly in the intestine.

It catalyses the reaction L-seryl-[protein] + ATP = O-phospho-L-seryl-[protein] + ADP + H(+). The catalysed reaction is L-threonyl-[protein] + ATP = O-phospho-L-threonyl-[protein] + ADP + H(+). With respect to regulation, activated by phosphorylation. Its function is as follows. Acts as a sensor that couples lifespan to information about energy levels and insulin-like signals. Role in motility and response to oxidative stress. Involved in the establishment of germline stem cell (GSC) quiescence during dauer development. Plays a role in axon regrowth after axotomy in PLM neurons. Plays a role in the maintenance of glycogen stores which are necessary for resistance to hyperosmotic stress. Plays a role in the regulation of flp-7 secretion from ASI neurons. Keeps the CREB-regulated transcription coactivator 1 homolog crtc-1 inactive which in turn inhibits flp-7 secretion. Following serotonin signaling, derepresses crtc-1 which stimulates flp-7 secretion and subsequent body fat loss. The chain is 5'-AMP-activated protein kinase catalytic subunit alpha-2 from Caenorhabditis elegans.